The sequence spans 95 residues: UPF0235 protein AnaeK_1146 (95 aa).

It belongs to the UPF0235 family.

This Anaeromyxobacter sp. (strain K) protein is UPF0235 protein AnaeK_1146.